Here is a 431-residue protein sequence, read N- to C-terminus: Glutamate--tRNA ligase 1 (431 aa).

A 'HIGH' region motif is present at residues 6–16 (PSPTGDMHIGN). Positions 235–239 (KMSKR) match the 'KMSKS' region motif. An ATP-binding site is contributed by Lys238.

The protein belongs to the class-I aminoacyl-tRNA synthetase family. Glutamate--tRNA ligase type 1 subfamily. Monomer.

The protein resides in the cytoplasm. It catalyses the reaction tRNA(Glu) + L-glutamate + ATP = L-glutamyl-tRNA(Glu) + AMP + diphosphate. Its function is as follows. Catalyzes the attachment of glutamate to tRNA(Glu) in a two-step reaction: glutamate is first activated by ATP to form Glu-AMP and then transferred to the acceptor end of tRNA(Glu). This Campylobacter curvus (strain 525.92) protein is Glutamate--tRNA ligase 1.